We begin with the raw amino-acid sequence, 650 residues long: Putative pumilio homolog 7, chloroplastic (650 aa).

Disordered regions lie at residues 1 to 22 (MDEFREASSVSSSPSTPLRTPL) and 200 to 235 (NDDKRNMFGNNPQQFGWPSYSSSNSGTSPYNNGQEI). A chloroplast-targeting transit peptide spans 1 to 77 (MDEFREASSV…SPPFNGIIPK (77 aa)). 2 stretches are compositionally biased toward low complexity: residues 8-22 (SSVSSSPSTPLRTPL) and 217-232 (PSYSSSNSGTSPYNNG). The region spanning 308-650 (SNTRALMSNN…RIFSRNLLKK (343 aa)) is the PUM-HD domain. 8 Pumilio repeats span residues 333–368 (DIQGYVYLMAKDQHGCRFLQRIFDEGTSVDAMIIFN), 369–404 (EVIAHVVELMMDPFGNYLMQKLLDVCTEEQRTQIVL), 408–443 (EEPGQLIRISLNAYGTRVVQRLVETIRSGKQISLVK), 445–480 (ALRPGFLDLIKDLNGNHVIQRCLQCLSTEDNKFIFD), 481–516 (AATKFCTEIATHRHGCCVLQKCIAYSMRQQREKLIA), 517–552 (EISRNSLLLAQDPFGNYAVQFVIELRIPSAVAMMLA), 553–591 (QLKGHYVQLSMQKFSSHMVERCLMHCPESRPQIVRELVS), and 594–625 (HFDQLLQDPYANFVIQAALAATKGPLHASLVE).

It localises to the plastid. The protein localises to the chloroplast. Its subcellular location is the cytoplasm. In terms of biological role, sequence-specific RNA-binding protein that regulates translation and mRNA stability by binding the 3'-UTR of target mRNAs. This is Putative pumilio homolog 7, chloroplastic (APUM7) from Arabidopsis thaliana (Mouse-ear cress).